Consider the following 701-residue polypeptide: Elongation factor G 2 (701 aa).

The region spanning Glu8–Ala291 is the tr-type G domain. GTP-binding positions include Ala17–Thr24, Asp88–His92, and Asn142–Asp145.

Belongs to the TRAFAC class translation factor GTPase superfamily. Classic translation factor GTPase family. EF-G/EF-2 subfamily.

The protein resides in the cytoplasm. Catalyzes the GTP-dependent ribosomal translocation step during translation elongation. During this step, the ribosome changes from the pre-translocational (PRE) to the post-translocational (POST) state as the newly formed A-site-bound peptidyl-tRNA and P-site-bound deacylated tRNA move to the P and E sites, respectively. Catalyzes the coordinated movement of the two tRNA molecules, the mRNA and conformational changes in the ribosome. This is Elongation factor G 2 from Burkholderia lata (strain ATCC 17760 / DSM 23089 / LMG 22485 / NCIMB 9086 / R18194 / 383).